The sequence spans 334 residues: Anthranilate phosphoribosyltransferase (334 aa).

5-phospho-alpha-D-ribose 1-diphosphate contacts are provided by residues glycine 79, 82-83, serine 87, 89-92, 107-115, and serine 119; these read GD, NIST, and KAGNRSISS. An anthranilate-binding site is contributed by glycine 79. Position 91 (serine 91) interacts with Mg(2+). Asparagine 110 is an anthranilate binding site. Arginine 165 contributes to the anthranilate binding site. Mg(2+) is bound by residues aspartate 224 and glutamate 225.

It belongs to the anthranilate phosphoribosyltransferase family. Homodimer. It depends on Mg(2+) as a cofactor.

It carries out the reaction N-(5-phospho-beta-D-ribosyl)anthranilate + diphosphate = 5-phospho-alpha-D-ribose 1-diphosphate + anthranilate. Its pathway is amino-acid biosynthesis; L-tryptophan biosynthesis; L-tryptophan from chorismate: step 2/5. Its function is as follows. Catalyzes the transfer of the phosphoribosyl group of 5-phosphorylribose-1-pyrophosphate (PRPP) to anthranilate to yield N-(5'-phosphoribosyl)-anthranilate (PRA). The polypeptide is Anthranilate phosphoribosyltransferase (Streptococcus thermophilus (strain CNRZ 1066)).